The sequence spans 164 residues: uncharacterized protein (164 aa).

This is an uncharacterized protein from Saccharomyces cerevisiae (strain ATCC 204508 / S288c) (Baker's yeast).